The following is a 92-amino-acid chain: Small ribosomal subunit protein uS19 (92 aa).

This sequence belongs to the universal ribosomal protein uS19 family.

Protein S19 forms a complex with S13 that binds strongly to the 16S ribosomal RNA. The sequence is that of Small ribosomal subunit protein uS19 from Bifidobacterium adolescentis (strain ATCC 15703 / DSM 20083 / NCTC 11814 / E194a).